A 176-amino-acid polypeptide reads, in one-letter code: Large ribosomal subunit protein uL6 (176 aa).

Belongs to the universal ribosomal protein uL6 family. Part of the 50S ribosomal subunit.

This protein binds to the 23S rRNA, and is important in its secondary structure. It is located near the subunit interface in the base of the L7/L12 stalk, and near the tRNA binding site of the peptidyltransferase center. This Methanosarcina mazei (strain ATCC BAA-159 / DSM 3647 / Goe1 / Go1 / JCM 11833 / OCM 88) (Methanosarcina frisia) protein is Large ribosomal subunit protein uL6.